The chain runs to 2241 residues: Large tegument protein deneddylase (2241 aa).

Residues 1–238 form a deubiquitination activity region; that stretch reads MKVTQASCHQ…IDLTGVVRES (238 aa). The region spanning 4–226 is the Peptidase C76 domain; it reads TQASCHQGDI…AARLVSTYRD (223 aa). Active-site residues include Cys24, Asp160, and His162. A disordered region spans residues 239 to 314; it reads ADTAATTTTA…STTSKTLATA (76 aa). Over residues 240–250 the composition is skewed to low complexity; sequence DTAATTTTAAP. The span at 251 to 268 shows a compositional bias: pro residues; sequence SLPPLPDPIVDPGCPPGV. Residues 304–314 are compositionally biased toward low complexity; it reads PSTTSKTLATA. An interaction with inner tegument protein region spans residues 327-331; the sequence is SSAVP. The segment at 1170-1229 is disordered; sequence RSSQQKMEEQLQETRQQMTETSERLDRSLRQDPGSSSVTRVPEKPFKGQELAGRITPPPA. Positions 1190–1199 are enriched in basic and acidic residues; it reads TSERLDRSLR.

It belongs to the herpesviridae large tegument protein family. Interacts with host CUL1 and CUL4A; these interactions inhibit the E3 ligase activity of cullins. Interacts with inner tegument protein. Interacts with capsid vertex specific component CVC2. Interacts with the major capsid protein/MCP.

Its subcellular location is the virion tegument. The protein resides in the host cytoplasm. It localises to the host nucleus. The enzyme catalyses Thiol-dependent hydrolysis of ester, thioester, amide, peptide and isopeptide bonds formed by the C-terminal Gly of ubiquitin (a 76-residue protein attached to proteins as an intracellular targeting signal).. In terms of biological role, large tegument protein that plays multiple roles in the viral cycle. During viral entry, remains associated with the capsid while most of the tegument is detached and participates in the capsid transport toward the host nucleus. Plays a role in the routing of the capsid at the nuclear pore complex and subsequent uncoating. Within the host nucleus, acts as a deneddylase and promotes the degradation of nuclear CRLs (cullin-RING ubiquitin ligases) and thereby stabilizes nuclear CRL substrates, while cytoplasmic CRLs remain unaffected. These modifications prevent host cell cycle S-phase progression and create a favorable environment allowing efficient viral genome replication. Participates later in the secondary envelopment of capsids. Indeed, plays a linker role for the association of the outer viral tegument to the capsids together with the inner tegument protein. This is Large tegument protein deneddylase (UL48) from Human cytomegalovirus (strain AD169) (HHV-5).